The following is a 111-amino-acid chain: U-scoloptoxin(16)-Er8a (111 aa).

The N-terminal stretch at 1-26 (MTSTRKLSVSCLIVFMVSSLIAVSSG) is a signal peptide.

This sequence belongs to the scoloptoxin-16 family. Contains 4 disulfide bonds. Expressed by the venom gland.

It localises to the secreted. In Ethmostigmus rubripes (Giant centipede), this protein is U-scoloptoxin(16)-Er8a.